The following is a 286-amino-acid chain: Putative L-ribulose-5-phosphate 3-epimerase SgbU (286 aa).

The protein belongs to the L-ribulose-5-phosphate 3-epimerase family.

The enzyme catalyses L-ribulose 5-phosphate = L-xylulose 5-phosphate. Catalyzes the isomerization of L-xylulose-5-phosphate to L-ribulose-5-phosphate. This is Putative L-ribulose-5-phosphate 3-epimerase SgbU (sgbU) from Haemophilus influenzae (strain ATCC 51907 / DSM 11121 / KW20 / Rd).